The sequence spans 991 residues: Collagenase ColT (991 aa).

Residues 1–28 form the signal peptide; the sequence is MKKKFIKMLCSIAIGCMISTSYSIKVSA. Residues 29–52 constitute a propeptide that is removed on maturation; that stretch reads FSNGNTKTNPNGEFKSLSLNSTNP. The interval 53–727 is S1 metalloprotease domain, degrades FALGPA (furylacryloyl-Leu-Gly-Pro-Ala); that stretch reads YKTKYSFNDL…VYDIVFHGLL (675 aa). The tract at residues 57–330 is activator domain; that stretch reads YSFNDLNKLS…AIEAIKEDFN (274 aa). Positions 340-611 are catalytic subdomain; that stretch reads DINKLIEEGK…MENLVNNYDN (272 aa). Glu440 lines the Ca(2+) pocket. Position 465 (His465) interacts with Zn(2+). Glu466 is a catalytic residue. Position 469 (His469) interacts with Zn(2+). Ca(2+) is bound by residues Gly473, Ile477, and Gly479. Glu499 contributes to the Zn(2+) binding site. The tract at residues 619–731 is helper subdomain; it reads DDYMKQYDNK…VFHGLLSHNK (113 aa). Collagen-binding domain stretches follow at residues 755-870 and 878-991; these read IYEK…NISD and IKKI…VIIN. Positions 757, 759, 761, 784, 787, 883, 885, 887, 888, 910, and 913 each coordinate Ca(2+).

It belongs to the peptidase M9B family. Collagenase subfamily. It depends on Ca(2+) as a cofactor. Zn(2+) is required as a cofactor.

The protein resides in the secreted. The catalysed reaction is Digestion of native collagen in the triple helical region at Xaa-|-Gly bonds. With synthetic peptides, a preference is shown for Gly at P3 and P1', Pro and Ala at P2 and P2', and hydroxyproline, Ala or Arg at P3'.. Its activity is regulated as follows. Partially inhibited by 1-10-phenanthroline; inactivation is irreversible. Partially inhibited by EDTA; inactivation is reversible. Inhibited by broad-spectrum zinc metalloprotease inhibitor batimastat. N-aryl mercaptoacetamide-based inhibitors have been isolated that act on clostridial collagenases with submicromolar affinity while having negligibile activity on human collagenases. Its function is as follows. Clostridial collagenases are among the most efficient degraders of eukaryotic collagen known; saprophytes use collagen as a carbon source while pathogens additionally digest collagen to aid in host colonization. Has both tripeptidylcarboxypeptidase on Gly-X-Y and endopeptidase activities; the endopeptidase cuts within the triple helix region of collagen while tripeptidylcarboxypeptidase successively digests the exposed ends, thus clostridial collagenases can digest large sections of collagen. The activator domain (residues 57-330) and catalytic subdomain (340-611) open and close around substrate allowing digestion when the protein is closed. The protein is Collagenase ColT of Clostridium tetani (strain Massachusetts / E88).